A 710-amino-acid chain; its full sequence is Choline transporter-like protein 2 (710 aa).

Residues 1-34 are Cytoplasmic-facing; sequence MEDDGKSPPDSAYGEPKKYDPNFKGPIQNRGCTD. The chain crosses the membrane as a helical span at residues 35–55; the sequence is ILCCILIVLGIIAYVAVGIVA. Topologically, residues 56–236 are extracellular; that stretch reads WTYGDPRKVI…KIFEDYTVSW (181 aa). Residues asparagine 147, asparagine 190, and asparagine 204 are each glycosylated (N-linked (GlcNAc...) asparagine). A helical transmembrane segment spans residues 237 to 257; it reads YWIIIGLIIAMVISLIFVVLL. Residues 258 to 260 lie on the Cytoplasmic side of the membrane; sequence RFL. A helical transmembrane segment spans residues 261 to 281; it reads AGIMVWVMIVLVIAVMGYGIF. The Extracellular portion of the chain corresponds to 282–319; that stretch reads HCYMEYARLKGQSGSDVTLKDIGFQTDIRVYLHLRQTW. The helical transmembrane segment at 320 to 340 threads the bilayer; sequence LAFMIILCILEVIVILLLIFL. Over 341–368 the chain is Cytoplasmic; the sequence is RKRIMIAIALIKEASRAVGFVMSSLVFP. The helical transmembrane segment at 369-389 threads the bilayer; it reads LFTFLLVCLCIAYWAITAVFL. Residues 390–458 lie on the Extracellular side of the membrane; that stretch reads STSNEAVYKV…FQIYNAFMFL (69 aa). Residues asparagine 401, asparagine 418, and asparagine 421 are each glycosylated (N-linked (GlcNAc...) asparagine). The helical transmembrane segment at 459 to 481 threads the bilayer; the sequence is WLANFVIALGQVTLAGAFASYYW. The Cytoplasmic segment spans residues 482 to 508; it reads AFKKPDDMPAFPIFSSLGRALRYHTGS. The helical transmembrane segment at 509-529 threads the bilayer; sequence LAFGSLILAIVQMIRILLEYL. Residues 530 to 567 are Extracellular-facing; that stretch reads DHKLKGADNKCARFLLCCLKCCFWCLEKFIKFLNRNAY. A helical membrane pass occupies residues 568–588; the sequence is IMIAIYGTNFCTSARNAFFLL. Residues 589-603 lie on the Cytoplasmic side of the membrane; sequence MRNIIRVAVLDKVTD. The chain crosses the membrane as a helical span at residues 604 to 624; sequence FLLFLGKLLVVGCVGILAFFF. Over 625–642 the chain is Extracellular; the sequence is FSRRIQIVQDTAPTLNYY. Residues 643–663 traverse the membrane as a helical segment; it reads WVPILTVILGSYLIAHGFFSV. Residues 664-710 lie on the Cytoplasmic side of the membrane; that stretch reads YGMCVDTLFLCFLEDLERNDGSTERPYFMSGSLQKLLNKSNQTKPDK.

This sequence belongs to the CTL (choline transporter-like) family.

The protein localises to the cell membrane. The protein resides in the mitochondrion outer membrane. It carries out the reaction choline(out) + n H(+)(in) = choline(in) + n H(+)(out). The catalysed reaction is ethanolamine(out) + n H(+)(in) = ethanolamine(in) + n H(+)(out). Choline/H+ antiporter, mainly in mitochodria. Also acts as a low-affinity ethanolamine/H+ antiporter, regulating the supply of extracellular ethanolamine (Etn) for the CDP-Etn pathway, redistribute intracellular Etn and balance the CDP-Cho and CDP-Etn arms of the Kennedy pathway. This Xenopus laevis (African clawed frog) protein is Choline transporter-like protein 2 (slc44a2).